A 365-amino-acid chain; its full sequence is NAC domain-containing protein 43 (365 aa).

Positions 16–180 (VPPGFRFHPT…GWVVCRIFKK (165 aa)) constitute an NAC domain. A DNA-binding region spans residues 116–186 (IGMRKTLVFY…IFKKKNLHKT (71 aa)).

In terms of tissue distribution, expressed in various aboveground tissues undergoing thickening of the lignified secondary wall such as anthers, filaments of stamens, the base of carpels, styles, the boundaries between siliques and pedicels, the midrib of leaf veins, and inflorescence stems, specifically in interfascicular fibers (sclerenchyma), cells differentiating into vascular vessels, and xylary fibers (secondary xylem).

Its subcellular location is the nucleus. Functionally, transcription activator of genes involved in biosynthesis of secondary walls. Together with NST2 and NST3, required for the secondary cell wall thickening of sclerenchymatous fibers, secondary xylem (tracheary elements), and of the anther endocethium, which is necessary for anther dehiscence. May also regulate the secondary cell wall lignification of other tissues. The polypeptide is NAC domain-containing protein 43 (NAC043) (Arabidopsis thaliana (Mouse-ear cress)).